The following is a 117-amino-acid chain: Urease subunit beta (117 aa).

The disordered stretch occupies residues 95–117 (NAVNGKLDGGPHPGVPATERGAK).

This sequence belongs to the urease beta subunit family. As to quaternary structure, heterotrimer of UreA (gamma), UreB (beta) and UreC (alpha) subunits. Three heterotrimers associate to form the active enzyme.

The protein resides in the cytoplasm. It carries out the reaction urea + 2 H2O + H(+) = hydrogencarbonate + 2 NH4(+). It functions in the pathway nitrogen metabolism; urea degradation; CO(2) and NH(3) from urea (urease route): step 1/1. This chain is Urease subunit beta, found in Pseudarthrobacter chlorophenolicus (strain ATCC 700700 / DSM 12829 / CIP 107037 / JCM 12360 / KCTC 9906 / NCIMB 13794 / A6) (Arthrobacter chlorophenolicus).